Consider the following 390-residue polypeptide: Phosphopentomutase (390 aa).

Mn(2+)-binding residues include Asp-10, Asp-284, His-289, Asp-325, His-326, and His-337.

Belongs to the phosphopentomutase family. Mn(2+) is required as a cofactor.

Its subcellular location is the cytoplasm. It carries out the reaction 2-deoxy-alpha-D-ribose 1-phosphate = 2-deoxy-D-ribose 5-phosphate. The catalysed reaction is alpha-D-ribose 1-phosphate = D-ribose 5-phosphate. The protein operates within carbohydrate degradation; 2-deoxy-D-ribose 1-phosphate degradation; D-glyceraldehyde 3-phosphate and acetaldehyde from 2-deoxy-alpha-D-ribose 1-phosphate: step 1/2. Functionally, isomerase that catalyzes the conversion of deoxy-ribose 1-phosphate (dRib-1-P) and ribose 1-phosphate (Rib-1-P) to deoxy-ribose 5-phosphate (dRib-5-P) and ribose 5-phosphate (Rib-5-P), respectively. This Clostridioides difficile (strain 630) (Peptoclostridium difficile) protein is Phosphopentomutase.